Reading from the N-terminus, the 258-residue chain is Imidazole glycerol phosphate synthase subunit HisF (258 aa).

Catalysis depends on residues D11 and D130.

The protein belongs to the HisA/HisF family. As to quaternary structure, heterodimer of HisH and HisF.

The protein resides in the cytoplasm. The enzyme catalyses 5-[(5-phospho-1-deoxy-D-ribulos-1-ylimino)methylamino]-1-(5-phospho-beta-D-ribosyl)imidazole-4-carboxamide + L-glutamine = D-erythro-1-(imidazol-4-yl)glycerol 3-phosphate + 5-amino-1-(5-phospho-beta-D-ribosyl)imidazole-4-carboxamide + L-glutamate + H(+). The protein operates within amino-acid biosynthesis; L-histidine biosynthesis; L-histidine from 5-phospho-alpha-D-ribose 1-diphosphate: step 5/9. Functionally, IGPS catalyzes the conversion of PRFAR and glutamine to IGP, AICAR and glutamate. The HisF subunit catalyzes the cyclization activity that produces IGP and AICAR from PRFAR using the ammonia provided by the HisH subunit. In Pectobacterium carotovorum subsp. carotovorum (strain PC1), this protein is Imidazole glycerol phosphate synthase subunit HisF.